A 367-amino-acid polypeptide reads, in one-letter code: tRNA-specific 2-thiouridylase MnmA (367 aa).

Residues 13–20 and methionine 39 contribute to the ATP site; that span reads GLSGGVDS. The interaction with target base in tRNA stretch occupies residues 99–101; it reads NPD. Cysteine 104 functions as the Nucleophile in the catalytic mechanism. The cysteines at positions 104 and 200 are disulfide-linked. Glycine 128 contacts ATP. The tract at residues 150-152 is interaction with tRNA; the sequence is KDQ. The active-site Cysteine persulfide intermediate is cysteine 200. The interval 307-308 is interaction with tRNA; sequence RY.

This sequence belongs to the MnmA/TRMU family.

The protein localises to the cytoplasm. It catalyses the reaction S-sulfanyl-L-cysteinyl-[protein] + uridine(34) in tRNA + AH2 + ATP = 2-thiouridine(34) in tRNA + L-cysteinyl-[protein] + A + AMP + diphosphate + H(+). Functionally, catalyzes the 2-thiolation of uridine at the wobble position (U34) of tRNA, leading to the formation of s(2)U34. The polypeptide is tRNA-specific 2-thiouridylase MnmA (Neisseria gonorrhoeae (strain ATCC 700825 / FA 1090)).